The chain runs to 61 residues: Large ribosomal subunit protein bL28 (61 aa).

It belongs to the bacterial ribosomal protein bL28 family.

The sequence is that of Large ribosomal subunit protein bL28 from Geobacillus sp. (strain WCH70).